The chain runs to 64 residues: MGIKPTYIKKIGIELLEFHEEKFTNDFDENKKAVASATNVPSKRVRNRVAGYITRKINTGKFKK.

Belongs to the eukaryotic ribosomal protein eS17 family.

This Methanospirillum hungatei JF-1 (strain ATCC 27890 / DSM 864 / NBRC 100397 / JF-1) protein is Small ribosomal subunit protein eS17.